A 633-amino-acid chain; its full sequence is 1-deoxy-D-xylulose-5-phosphate synthase (633 aa).

Thiamine diphosphate-binding positions include histidine 72 and 113-115 (GHS). Aspartate 144 is a Mg(2+) binding site. Residues 145–146 (GA), asparagine 173, tyrosine 284, and glutamate 367 each bind thiamine diphosphate. Asparagine 173 is a Mg(2+) binding site.

It belongs to the transketolase family. DXPS subfamily. Homodimer. Mg(2+) serves as cofactor. The cofactor is thiamine diphosphate.

The catalysed reaction is D-glyceraldehyde 3-phosphate + pyruvate + H(+) = 1-deoxy-D-xylulose 5-phosphate + CO2. Its pathway is metabolic intermediate biosynthesis; 1-deoxy-D-xylulose 5-phosphate biosynthesis; 1-deoxy-D-xylulose 5-phosphate from D-glyceraldehyde 3-phosphate and pyruvate: step 1/1. Its function is as follows. Catalyzes the acyloin condensation reaction between C atoms 2 and 3 of pyruvate and glyceraldehyde 3-phosphate to yield 1-deoxy-D-xylulose-5-phosphate (DXP). In Bacillus velezensis (strain DSM 23117 / BGSC 10A6 / LMG 26770 / FZB42) (Bacillus amyloliquefaciens subsp. plantarum), this protein is 1-deoxy-D-xylulose-5-phosphate synthase.